The primary structure comprises 23 residues: ENFAGGCTPGYQRTADGRCKATF.

A disulfide bridge links Cys7 with Cys19.

Belongs to the GBP/PSP1/paralytic peptide family. In terms of tissue distribution, hemolymph.

In terms of biological role, causes rapid, rigid paralysis when injected into Lepidopteran larvae. The physiological role may be to reduce hemolymph loss following injury and promote wound healing. The chain is Paralytic peptide 1 from Spodoptera exigua (Beet armyworm).